Reading from the N-terminus, the 273-residue chain is Dermonecrotic toxin LspaSicTox-alphaIA2i (273 aa).

Histidine 5 is an active-site residue. Glutamate 25 and aspartate 27 together coordinate Mg(2+). Histidine 41 acts as the Nucleophile in catalysis. Disulfide bonds link cysteine 45–cysteine 51 and cysteine 47–cysteine 190. Mg(2+) is bound at residue aspartate 85.

The protein belongs to the arthropod phospholipase D family. Class II subfamily. The cofactor is Mg(2+). Expressed by the venom gland.

The protein resides in the secreted. It carries out the reaction an N-(acyl)-sphingosylphosphocholine = an N-(acyl)-sphingosyl-1,3-cyclic phosphate + choline. The enzyme catalyses an N-(acyl)-sphingosylphosphoethanolamine = an N-(acyl)-sphingosyl-1,3-cyclic phosphate + ethanolamine. The catalysed reaction is a 1-acyl-sn-glycero-3-phosphocholine = a 1-acyl-sn-glycero-2,3-cyclic phosphate + choline. It catalyses the reaction a 1-acyl-sn-glycero-3-phosphoethanolamine = a 1-acyl-sn-glycero-2,3-cyclic phosphate + ethanolamine. Its function is as follows. Dermonecrotic toxins cleave the phosphodiester linkage between the phosphate and headgroup of certain phospholipids (sphingolipid and lysolipid substrates), forming an alcohol (often choline) and a cyclic phosphate. This toxin acts on sphingomyelin (SM). It may also act on ceramide phosphoethanolamine (CPE), lysophosphatidylcholine (LPC) and lysophosphatidylethanolamine (LPE), but not on lysophosphatidylserine (LPS), and lysophosphatidylglycerol (LPG). It acts by transphosphatidylation, releasing exclusively cyclic phosphate products as second products. Induces dermonecrosis, hemolysis, increased vascular permeability, edema, inflammatory response, and platelet aggregation. This chain is Dermonecrotic toxin LspaSicTox-alphaIA2i, found in Loxosceles spadicea (Recluse spider).